A 515-amino-acid polypeptide reads, in one-letter code: 1-pyrroline-5-carboxylate dehydrogenase (515 aa).

Active-site residues include Glu286 and Cys320.

This sequence belongs to the aldehyde dehydrogenase family. RocA subfamily.

The catalysed reaction is L-glutamate 5-semialdehyde + NAD(+) + H2O = L-glutamate + NADH + 2 H(+). It participates in amino-acid degradation; L-proline degradation into L-glutamate; L-glutamate from L-proline: step 2/2. The protein is 1-pyrroline-5-carboxylate dehydrogenase of Anoxybacillus flavithermus (strain DSM 21510 / WK1).